Consider the following 427-residue polypeptide: MKLKTNIRHLHGSIRVPGDKSISHRSIIFGSLAEGETKVYDILRGEDVLSTMQVFRDLGVEIEDKDGVITIQGVGMAGLKAPQNALNMGNSGTSIRLISGVLAGADFEVEMFGDDSLSKRPMDRVTLPLKKMGVSISGQTERDLPPLRLKGTKNLRPIHYELPIASAQVKSALMFAALQAKGASVIIEKECTRNHTEDMLKQFGGHLSVDSKKITVQGPQKLTGQKVVVPGDISSAAFWLVAGLIVPNSRLVLQNVGINETRTGIIDVIRAMGGKLEITEIDPVAKSSTLTVESSDLKGTEIGGALIPRLIDELPIIALLATQAQGVTVIKDAEELKVKETDRIQVVADALNSMGADITPTADGMIIKGKSALHGARVNTFGDHRIGMMTAIAALLVADGEVELDRAEAINTSYPSFFDDLESLIHG.

3 residues coordinate 3-phosphoshikimate: lysine 20, serine 21, and arginine 25. Residue lysine 20 participates in phosphoenolpyruvate binding. Phosphoenolpyruvate is bound by residues glycine 92 and arginine 120. 3-phosphoshikimate-binding residues include serine 166, glutamine 168, aspartate 312, and lysine 339. Glutamine 168 provides a ligand contact to phosphoenolpyruvate. Residue aspartate 312 is the Proton acceptor of the active site. Phosphoenolpyruvate is bound by residues arginine 343 and arginine 385.

The protein belongs to the EPSP synthase family. Monomer.

The protein resides in the cytoplasm. The enzyme catalyses 3-phosphoshikimate + phosphoenolpyruvate = 5-O-(1-carboxyvinyl)-3-phosphoshikimate + phosphate. The protein operates within metabolic intermediate biosynthesis; chorismate biosynthesis; chorismate from D-erythrose 4-phosphate and phosphoenolpyruvate: step 6/7. In terms of biological role, catalyzes the transfer of the enolpyruvyl moiety of phosphoenolpyruvate (PEP) to the 5-hydroxyl of shikimate-3-phosphate (S3P) to produce enolpyruvyl shikimate-3-phosphate and inorganic phosphate. This Streptococcus pneumoniae (strain Hungary19A-6) protein is 3-phosphoshikimate 1-carboxyvinyltransferase.